Here is a 538-residue protein sequence, read N- to C-terminus: NAD(P)H-quinone oxidoreductase chain 4 1 (538 aa).

13 helical membrane-spanning segments follow: residues 7–27, 37–57, 88–108, 116–136, 137–157, 170–190, 210–230, 244–264, 278–298, 315–335, 336–356, 388–408, and 418–438; these read FPWL…IPII, WYGL…FWHY, LSMP…FAAW, LFYG…VAQD, LLLF…LISI, FILY…ALAF, AIEL…LPIF, SAPG…YALI, FAPV…CCAF, MGFV…GAVL, QMVS…VTYE, LALP…GIAT, and VVVV…LLSM.

It belongs to the complex I subunit 4 family.

The protein localises to the cellular thylakoid membrane. The catalysed reaction is a plastoquinone + NADH + (n+1) H(+)(in) = a plastoquinol + NAD(+) + n H(+)(out). It carries out the reaction a plastoquinone + NADPH + (n+1) H(+)(in) = a plastoquinol + NADP(+) + n H(+)(out). Its function is as follows. NDH-1 shuttles electrons from NAD(P)H, via FMN and iron-sulfur (Fe-S) centers, to quinones in the respiratory chain. The immediate electron acceptor for the enzyme in this species is believed to be plastoquinone. Couples the redox reaction to proton translocation (for every two electrons transferred, four hydrogen ions are translocated across the cytoplasmic membrane), and thus conserves the redox energy in a proton gradient. The protein is NAD(P)H-quinone oxidoreductase chain 4 1 of Nostoc sp. (strain PCC 7120 / SAG 25.82 / UTEX 2576).